A 482-amino-acid chain; its full sequence is Probable cytosol aminopeptidase (482 aa).

The Mn(2+) site is built by lysine 251 and aspartate 256. The active site involves lysine 263. 3 residues coordinate Mn(2+): aspartate 274, aspartate 333, and glutamate 335. Arginine 337 is an active-site residue.

This sequence belongs to the peptidase M17 family. It depends on Mn(2+) as a cofactor.

Its subcellular location is the cytoplasm. The enzyme catalyses Release of an N-terminal amino acid, Xaa-|-Yaa-, in which Xaa is preferably Leu, but may be other amino acids including Pro although not Arg or Lys, and Yaa may be Pro. Amino acid amides and methyl esters are also readily hydrolyzed, but rates on arylamides are exceedingly low.. It carries out the reaction Release of an N-terminal amino acid, preferentially leucine, but not glutamic or aspartic acids.. Its function is as follows. Presumably involved in the processing and regular turnover of intracellular proteins. Catalyzes the removal of unsubstituted N-terminal amino acids from various peptides. This is Probable cytosol aminopeptidase from Acinetobacter baylyi (strain ATCC 33305 / BD413 / ADP1).